The primary structure comprises 309 residues: Aspartate carbamoyltransferase catalytic subunit (309 aa).

The carbamoyl phosphate site is built by arginine 58 and threonine 59. Lysine 87 serves as a coordination point for L-aspartate. Positions 108, 136, and 139 each coordinate carbamoyl phosphate. 2 residues coordinate L-aspartate: arginine 168 and arginine 229. Residues leucine 268 and proline 269 each contribute to the carbamoyl phosphate site.

It belongs to the aspartate/ornithine carbamoyltransferase superfamily. ATCase family. As to quaternary structure, heterooligomer of catalytic and regulatory chains.

It catalyses the reaction carbamoyl phosphate + L-aspartate = N-carbamoyl-L-aspartate + phosphate + H(+). It functions in the pathway pyrimidine metabolism; UMP biosynthesis via de novo pathway; (S)-dihydroorotate from bicarbonate: step 2/3. Functionally, catalyzes the condensation of carbamoyl phosphate and aspartate to form carbamoyl aspartate and inorganic phosphate, the committed step in the de novo pyrimidine nucleotide biosynthesis pathway. This chain is Aspartate carbamoyltransferase catalytic subunit, found in Methanosarcina mazei (strain ATCC BAA-159 / DSM 3647 / Goe1 / Go1 / JCM 11833 / OCM 88) (Methanosarcina frisia).